The chain runs to 299 residues: Bifunctional protein FolD (299 aa).

NADP(+) contacts are provided by residues 168–170 (GRS), Ser193, and Ile234.

Belongs to the tetrahydrofolate dehydrogenase/cyclohydrolase family. In terms of assembly, homodimer.

The catalysed reaction is (6R)-5,10-methylene-5,6,7,8-tetrahydrofolate + NADP(+) = (6R)-5,10-methenyltetrahydrofolate + NADPH. The enzyme catalyses (6R)-5,10-methenyltetrahydrofolate + H2O = (6R)-10-formyltetrahydrofolate + H(+). It participates in one-carbon metabolism; tetrahydrofolate interconversion. Functionally, catalyzes the oxidation of 5,10-methylenetetrahydrofolate to 5,10-methenyltetrahydrofolate and then the hydrolysis of 5,10-methenyltetrahydrofolate to 10-formyltetrahydrofolate. The polypeptide is Bifunctional protein FolD (Bartonella henselae (strain ATCC 49882 / DSM 28221 / CCUG 30454 / Houston 1) (Rochalimaea henselae)).